Here is an 86-residue protein sequence, read N- to C-terminus: Small ribosomal subunit protein bS20 (86 aa).

Residues 1 to 22 (MANIASARKRARQAEKNRQHNM) form a disordered region.

The protein belongs to the bacterial ribosomal protein bS20 family.

Binds directly to 16S ribosomal RNA. The chain is Small ribosomal subunit protein bS20 from Thioalkalivibrio sulfidiphilus (strain HL-EbGR7).